A 516-amino-acid chain; its full sequence is 4-hydroxybenzoate brominase (decarboxylating) (516 aa).

FAD-binding residues include Ser13, Glu32, Val40, Phe41, His51, Val102, and Gln365.

Belongs to the FMO family. It depends on FAD as a cofactor.

The catalysed reaction is 2 bromide + 4-hydroxybenzoate + 2 NADPH + 2 O2 + 5 H(+) = 2,4-dibromophenol + CO2 + 2 NADP(+) + 4 H2O. It catalyses the reaction bromide + 4-hydroxybenzoate + NADPH + O2 + 2 H(+) = 3-bromo-4-hydroxybenzoate + NADP(+) + 2 H2O. It carries out the reaction 3-bromo-4-hydroxybenzoate + bromide + NADPH + O2 + 3 H(+) = 2,4-dibromophenol + CO2 + NADP(+) + 2 H2O. The enzyme catalyses 3,4-dihydroxybenzoate + 2 bromide + 2 NADPH + 2 O2 + 5 H(+) = 3,5-dibromobenzene-1,2-diol + CO2 + 2 NADP(+) + 4 H2O. The catalysed reaction is 3,4-dihydroxybenzoate + bromide + NADPH + O2 + 2 H(+) = 3-bromo-4,5-dihydroxybenzoate + NADP(+) + 2 H2O. It catalyses the reaction 3-bromo-4,5-dihydroxybenzoate + bromide + NADPH + O2 + 3 H(+) = 3,5-dibromobenzene-1,2-diol + CO2 + NADP(+) + 2 H2O. Brominase involved in the biosynthesis of polybrominated aromatic organic compounds. Catalyzes the bromination of 4-hydroxybenzoate (4-HBA) to 3-bromo-4-hydroxybenzoate, followed by bromination and decarboxylation of 3-bromo-4-hydroxybenzoate to 2,4-dibromophenol. Can also use 3,4-dihydroxybenzoate, with lower efficiency, forming 3-bromo-4,5-dihydroxybenzoate and 3,5-dibromobenzene-1,2-diol. The polypeptide is 4-hydroxybenzoate brominase (decarboxylating) (Marinomonas mediterranea (strain ATCC 700492 / JCM 21426 / NBRC 103028 / MMB-1)).